We begin with the raw amino-acid sequence, 278 residues long: Protein D7 (278 aa).

2 CHHC U11-48K-type zinc fingers span residues 6 to 33 and 40 to 67; these read LMQCPYDKNHMIRPSRFPYHLVKCRENN and LATCPYNARHRVPKQELDLHMASCEYRV. Cys-9, His-15, His-25, Cys-29, Cys-43, His-49, His-59, and Cys-63 together coordinate Zn(2+). Residues 149–164 show a composition bias toward polar residues; that stretch reads QVKQNQPEPEPFTSSE. Disordered stretches follow at residues 149–230 and 249–278; these read QVKQ…PKAN and PGGSSAASEPLGVDSFDEWPCLGRQPWVRK. A compositionally biased stretch (basic and acidic residues) spans 165–175; it reads RNYDPRSKEPP. The segment covering 188–200 has biased composition (polar residues); it reads ATTNTNPWCRQTG. The segment covering 214–225 has biased composition (basic and acidic residues); that stretch reads SSDEGPRNKEFP.

The protein belongs to the UPF0224 (FAM112) family.

The protein localises to the cytoplasm. Functionally, involved in oocyte maturation. It is possible that D7 is required at a certain point in the maturation process and that maturation cannot proceed beyond this point unless a threshold amount of D7 protein is provided. The protein is Protein D7 (d7) of Xenopus laevis (African clawed frog).